The following is a 1183-amino-acid chain: DNA-directed RNA polymerase subunit beta (1183 aa).

The segment covering 1149 to 1162 has biased composition (acidic residues); the sequence is DNEIEMADVDDEDA. Positions 1149–1183 are disordered; it reads DNEIEMADVDDEDATERKVDLQQKDVPETQKETTD. Residues 1163–1183 are compositionally biased toward basic and acidic residues; it reads TERKVDLQQKDVPETQKETTD.

Belongs to the RNA polymerase beta chain family. As to quaternary structure, the RNAP catalytic core consists of 2 alpha, 1 beta, 1 beta' and 1 omega subunit. When a sigma factor is associated with the core the holoenzyme is formed, which can initiate transcription.

The catalysed reaction is RNA(n) + a ribonucleoside 5'-triphosphate = RNA(n+1) + diphosphate. Its function is as follows. DNA-dependent RNA polymerase catalyzes the transcription of DNA into RNA using the four ribonucleoside triphosphates as substrates. The polypeptide is DNA-directed RNA polymerase subunit beta (Staphylococcus haemolyticus (strain JCSC1435)).